The sequence spans 205 residues: High frequency lysogenization protein HflD homolog (205 aa).

The protein belongs to the HflD family.

It localises to the cytoplasm. The protein resides in the cell inner membrane. This chain is High frequency lysogenization protein HflD homolog, found in Alkalilimnicola ehrlichii (strain ATCC BAA-1101 / DSM 17681 / MLHE-1).